Reading from the N-terminus, the 517-residue chain is Endoglycoceramidase (517 aa).

The first 17 residues, 1–17 (MISVALIILFLAKVISG), serve as a signal peptide directing secretion. The N-linked (GlcNAc...) asparagine glycan is linked to Asn-99. Glu-230 serves as the catalytic Proton donor. Residues Asn-298, Asn-380, and Asn-393 are each glycosylated (N-linked (GlcNAc...) asparagine).

Belongs to the glycosyl hydrolase 5 (cellulase A) family. In terms of tissue distribution, expressed uniformly in digestive cells, tentacles and peduncle regions suggesting expression in the endoderm throughout the whole body (at protein level).

It localises to the secreted. It carries out the reaction an oligoglycosyl-(1-&gt;4)-beta-D-glucosyl-(1&lt;-&gt;1)-ceramide + H2O = an oligoglycosyl-(1-&gt;4)-D-glucose + an N-acyl-sphingoid base. Cu(2+), zinc, manganese, calcium, magnesium and EDTA have no significant effects on enzyme activity. Enzyme requires presence of detergents such as Triton X-100 and Lubrol PX for the hydrolysis of glycosphingolipids. Taurodeoxycholate strongly inhibits the enzyme activity. Functionally, hydrolysis of the glycosidic linkage between oligosaccharides and ceramides of glycosphingolipids, optimal substrates appear to be the glycosphingolipids with a gangliotetraose structure. This Hydra vulgaris (Hydra) protein is Endoglycoceramidase.